Consider the following 551-residue polypeptide: Methionine--tRNA ligase (551 aa).

A 'HIGH' region motif is present at residues 12–22 (PYANGPLHFGH). Positions 144, 147, 157, and 160 each coordinate Zn(2+). A 'KMSKS' region motif is present at residues 330-334 (QFSKS). Residue lysine 333 coordinates ATP.

The protein belongs to the class-I aminoacyl-tRNA synthetase family. MetG type 1 subfamily. As to quaternary structure, monomer. It depends on Zn(2+) as a cofactor.

It is found in the cytoplasm. It carries out the reaction tRNA(Met) + L-methionine + ATP = L-methionyl-tRNA(Met) + AMP + diphosphate. In terms of biological role, is required not only for elongation of protein synthesis but also for the initiation of all mRNA translation through initiator tRNA(fMet) aminoacylation. The protein is Methionine--tRNA ligase of Chlamydia abortus (strain DSM 27085 / S26/3) (Chlamydophila abortus).